A 226-amino-acid polypeptide reads, in one-letter code: Cytidylate kinase (226 aa).

12–20 contacts ATP; sequence GPSGAGKGT.

Belongs to the cytidylate kinase family. Type 1 subfamily.

It is found in the cytoplasm. The enzyme catalyses CMP + ATP = CDP + ADP. It carries out the reaction dCMP + ATP = dCDP + ADP. This is Cytidylate kinase from Xanthomonas campestris pv. campestris (strain 8004).